A 526-amino-acid chain; its full sequence is GMP synthase [glutamine-hydrolyzing] (526 aa).

The Glutamine amidotransferase type-1 domain occupies 3 to 199; that stretch reads RVAIIDFGSQ…FVRIAGCDNN (197 aa). The active-site Nucleophile is C83. Active-site residues include H174 and E176. The GMPS ATP-PPase domain maps to 200 to 392; sequence WTVESFLDEQ…LGISDEILMR (193 aa). 227–233 lines the ATP pocket; the sequence is SGGVDSS.

As to quaternary structure, homodimer.

The catalysed reaction is XMP + L-glutamine + ATP + H2O = GMP + L-glutamate + AMP + diphosphate + 2 H(+). The protein operates within purine metabolism; GMP biosynthesis; GMP from XMP (L-Gln route): step 1/1. Its function is as follows. Catalyzes the synthesis of GMP from XMP. This chain is GMP synthase [glutamine-hydrolyzing], found in Ehrlichia chaffeensis (strain ATCC CRL-10679 / Arkansas).